We begin with the raw amino-acid sequence, 500 residues long: Enolase (500 aa).

2 residues coordinate substrate: His225 and Glu234. The active-site Proton donor is Glu277. Asp312, Glu361, and Asp386 together coordinate Mg(2+). Substrate is bound by residues Glu361 and Asp386. Lys411 serves as the catalytic Proton acceptor. Substrate contacts are provided by residues 438–441 (SHRS) and Lys462.

Belongs to the enolase family. As to quaternary structure, homodimer. It depends on Mg(2+) as a cofactor.

The protein resides in the cytoplasm. The enzyme catalyses (2R)-2-phosphoglycerate = phosphoenolpyruvate + H2O. It participates in carbohydrate degradation; glycolysis; pyruvate from D-glyceraldehyde 3-phosphate: step 4/5. Its function is as follows. Enzyme of the glycolytic pathway. Glycolysis is essential in glial cells but not in neurons; neurons rely on the citric acid cycle for their energy needs, and on lactate and alanine secreted into the hemolymph by glial cells to fuel it. This Drosophila melanogaster (Fruit fly) protein is Enolase.